Here is a 531-residue protein sequence, read N- to C-terminus: Sop-2-related protein 3 (531 aa).

Expressed ubiquitously.

Its subcellular location is the cytoplasm. It localises to the nucleus. Functionally, probably acts synergistically with sop-2 to maintain the transcriptionally repressive state of homeotic genes in order to regulate various neurogenic identities. Specification of some neuronal identities also involves expression of non-Hox genes. Specifies dopaminergic and serotonergic neuronal cell fate, and regulates neurotransmitter choice and axon pathfinding. In Caenorhabditis elegans, this protein is Sop-2-related protein 3 (sor-3).